A 199-amino-acid chain; its full sequence is Nicotinamide riboside kinase 1 (199 aa).

10-18 (GVTNSGKTT) provides a ligand contact to ATP. Mg(2+) is bound by residues T17 and D36. Catalysis depends on D36, which acts as the Proton acceptor. Substrate is bound by residues 36 to 39 (DDFF) and 55 to 56 (YD). ATP is bound at residue R128. Substrate contacts are provided by residues R129 and 134–135 (YQ). ATP-binding positions include 132–134 (RVY) and 172–174 (KSE).

It belongs to the uridine kinase family. NRK subfamily. In terms of assembly, monomer.

It carries out the reaction beta-nicotinamide D-riboside + ATP = beta-nicotinamide D-ribonucleotide + ADP + H(+). It catalyses the reaction beta-D-ribosylnicotinate + ATP = nicotinate beta-D-ribonucleotide + ADP + H(+). The protein operates within cofactor biosynthesis; NAD(+) biosynthesis. In terms of biological role, catalyzes the phosphorylation of nicotinamide riboside (NR) and nicotinic acid riboside (NaR) to form nicotinamide mononucleotide (NMN) and nicotinic acid mononucleotide (NaMN). The enzyme also phosphorylates the antitumor drugs tiazofurin and 3-deazaguanosine. The chain is Nicotinamide riboside kinase 1 (NMRK1) from Homo sapiens (Human).